We begin with the raw amino-acid sequence, 313 residues long: Type I restriction enzyme EcoprrI endonuclease subunit (313 aa).

Belongs to the HsdR family. In terms of assembly, the type I restriction/modification system is composed of three polypeptides R, M and S; the restriction enzyme has stoichiometry R(2)M(2)S(1) while the methyltransferase is M(2)S(1).

The enzyme catalyses Endonucleolytic cleavage of DNA to give random double-stranded fragments with terminal 5'-phosphates, ATP is simultaneously hydrolyzed.. The subtype C restriction (R) subunit of a type I restriction enzyme that recognizes 5'-CCAN(7)RTGC-3' and cleaves a random distance away. The R subunit is required for both endonuclease and ATPase activities but not for modification. Cleaves only non-methylated DNA, hemi-methylated and fully methylated DNA are not substrates. After locating a non-methylated recognition site, the enzyme complex serves as a molecular motor that translocates DNA in an ATP-dependent manner until a collision occurs that triggers cleavage. The prr locus restricts phage T4 mutants lacking polynucleotide kinase or RNA ligase; T4 mutants lacking these genes manifest a T4-induced anticodon nuclease (ACNase). This is a putative 'masking-agent' for the ACNase encoded by prrC. It is thought that Stp and other T4-encoded ACNase factors counteract the masking agents, thus activating the latent ACNase. This Escherichia coli protein is Type I restriction enzyme EcoprrI endonuclease subunit.